The primary structure comprises 103 residues: Large ribosomal subunit protein bL21 (103 aa).

It belongs to the bacterial ribosomal protein bL21 family. As to quaternary structure, part of the 50S ribosomal subunit. Contacts protein L20.

Its function is as follows. This protein binds to 23S rRNA in the presence of protein L20. This is Large ribosomal subunit protein bL21 from Actinobacillus pleuropneumoniae serotype 7 (strain AP76).